Here is a 228-residue protein sequence, read N- to C-terminus: General odorant-binding protein 71 (228 aa).

Residues M1–G20 form the signal peptide. Residues T50–T131 form a disordered region. Residues G55 to R72 show a composition bias toward basic and acidic residues. The span at G83–S99 shows a compositional bias: low complexity. Positions A111–S120 are enriched in gly residues. Positions G121–T131 are enriched in low complexity. 2 cysteine pairs are disulfide-bonded: C138/C199 and C185/C208.

This sequence belongs to the PBP/GOBP family.

The protein resides in the secreted. Its function is as follows. Present in the aqueous fluid surrounding olfactory sensory dendrites and are thought to aid in the capture and transport of hydrophobic odorants into and through this fluid. The polypeptide is General odorant-binding protein 71 (Obp71) (Anopheles gambiae (African malaria mosquito)).